Reading from the N-terminus, the 179-residue chain is Dual-action ribosomal maturation protein DarP (179 aa).

The protein belongs to the DarP family.

The protein localises to the cytoplasm. Functionally, member of a network of 50S ribosomal subunit biogenesis factors which assembles along the 30S-50S interface, preventing incorrect 23S rRNA structures from forming. Promotes peptidyl transferase center (PTC) maturation. In Photorhabdus laumondii subsp. laumondii (strain DSM 15139 / CIP 105565 / TT01) (Photorhabdus luminescens subsp. laumondii), this protein is Dual-action ribosomal maturation protein DarP.